Consider the following 156-residue polypeptide: MDIIGQRGDPQIGNLATPVNSSRLSLAFIRNLPAYRRGLSANRRGLEVGMAHGYFLYGPFAILGPLRNTEYASTGGLLSAVAMISILTIALSLYASVEVGKPIETLTTPDVPEDLGTSVGWGEFANGFFIGGSGGVIFAYLLCQALYFDLIQKILG.

The next 2 helical transmembrane spans lie at 75 to 95 (GGLL…SLYA) and 128 to 148 (FFIG…ALYF).

Belongs to the PsaL family.

It localises to the cellular thylakoid membrane. The protein is Photosystem I reaction center subunit XI of Crocosphaera subtropica (strain ATCC 51142 / BH68) (Cyanothece sp. (strain ATCC 51142)).